The primary structure comprises 300 residues: Ribosomal protein L11 methyltransferase (300 aa).

S-adenosyl-L-methionine contacts are provided by Thr152, Gly173, Asp195, and Asn234.

It belongs to the methyltransferase superfamily. PrmA family.

Its subcellular location is the cytoplasm. The enzyme catalyses L-lysyl-[protein] + 3 S-adenosyl-L-methionine = N(6),N(6),N(6)-trimethyl-L-lysyl-[protein] + 3 S-adenosyl-L-homocysteine + 3 H(+). In terms of biological role, methylates ribosomal protein L11. The chain is Ribosomal protein L11 methyltransferase from Paraburkholderia phytofirmans (strain DSM 17436 / LMG 22146 / PsJN) (Burkholderia phytofirmans).